Reading from the N-terminus, the 63-residue chain is Large ribosomal subunit protein uL30 (63 aa).

This sequence belongs to the universal ribosomal protein uL30 family. Part of the 50S ribosomal subunit.

This is Large ribosomal subunit protein uL30 from Rickettsia felis (strain ATCC VR-1525 / URRWXCal2) (Rickettsia azadi).